The following is a 335-amino-acid chain: Lipase chaperone (335 aa).

Residues leucine 7–proline 23 traverse the membrane as a helical segment.

Belongs to the lipase chaperone family.

It localises to the cell inner membrane. In terms of biological role, may be involved in the folding of the extracellular lipase during its passage through the periplasm. The chain is Lipase chaperone (lifO) from Ectopseudomonas mendocina (Pseudomonas mendocina).